The sequence spans 102 residues: MPIAVGTIQTLGFPPIIAAADAMVKAARVTITQYGLAESAQFFVSVRGPVSEVETAVEAGLKAVAETEGAELINYIVIPNPQENVETVMPIDFTAESEPFRS.

The BMC domain occupies 4–90 (AVGTIQTLGF…PQENVETVMP (87 aa)).

It belongs to the bacterial microcompartments protein family. CcmK subfamily. As to quaternary structure, interacts stably with CcmK4, probably forms heterohexamers with a 1:2 CcmK3:CcmK4 stoichiometry. Bulky residues in the pore region probably preclude the formation of homohexamers by this subunit.

Its subcellular location is the carboxysome. Its function is as follows. A non-essential, minor shell protein of the carboxysome, a polyhedral inclusion where RuBisCO (ribulose bisphosphate carboxylase, rbcL-rbcS) is sequestered. Hexamers form sheets that form the facets of the polyhedral carboxysome. In PCC 7942 there are several CcmK paralogs with presumably functional differences. This subunit probably only makes heterohexamers with CcmK4. The CcmK3-CcmK4 heterohexmers have been suggested to cap other hexamers, perhaps to alter metabolite flux. The polypeptide is Carboxysome shell protein CcmK3 (Synechococcus elongatus (strain ATCC 33912 / PCC 7942 / FACHB-805) (Anacystis nidulans R2)).